A 268-amino-acid chain; its full sequence is tRNA pseudouridine synthase A (268 aa).

The Nucleophile role is filled by Asp52. Residue Tyr110 coordinates substrate.

It belongs to the tRNA pseudouridine synthase TruA family. Homodimer.

It catalyses the reaction uridine(38/39/40) in tRNA = pseudouridine(38/39/40) in tRNA. Functionally, formation of pseudouridine at positions 38, 39 and 40 in the anticodon stem and loop of transfer RNAs. This Prochlorococcus marinus (strain MIT 9215) protein is tRNA pseudouridine synthase A.